Reading from the N-terminus, the 502-residue chain is Glycerol kinase (502 aa).

Threonine 14 is a binding site for ADP. Threonine 14, threonine 15, and serine 16 together coordinate ATP. Threonine 14 lines the sn-glycerol 3-phosphate pocket. Residue arginine 18 participates in ADP binding. Arginine 84, glutamate 85, and tyrosine 136 together coordinate sn-glycerol 3-phosphate. 3 residues coordinate glycerol: arginine 84, glutamate 85, and tyrosine 136. Residue histidine 232 is modified to Phosphohistidine; by HPr. Aspartate 246 is a binding site for sn-glycerol 3-phosphate. Residues aspartate 246 and glutamine 247 each contribute to the glycerol site. Residues threonine 268 and glycine 311 each coordinate ADP. ATP is bound by residues threonine 268, glycine 311, glutamine 315, and glycine 412. 2 residues coordinate ADP: glycine 412 and asparagine 416.

This sequence belongs to the FGGY kinase family. In terms of assembly, homotetramer and homodimer (in equilibrium). The phosphoenolpyruvate-dependent sugar phosphotransferase system (PTS), including enzyme I, and histidine-containing protein (HPr) are required for the phosphorylation, which leads to the activation of the enzyme.

The catalysed reaction is glycerol + ATP = sn-glycerol 3-phosphate + ADP + H(+). The protein operates within polyol metabolism; glycerol degradation via glycerol kinase pathway; sn-glycerol 3-phosphate from glycerol: step 1/1. With respect to regulation, activated by phosphorylation and inhibited by fructose 1,6-bisphosphate (FBP). In terms of biological role, key enzyme in the regulation of glycerol uptake and metabolism. Catalyzes the phosphorylation of glycerol to yield sn-glycerol 3-phosphate. The chain is Glycerol kinase from Streptococcus pneumoniae serotype 2 (strain D39 / NCTC 7466).